The chain runs to 204 residues: Thymidylate kinase (204 aa).

Residue 10–17 (GGDGAGKT) participates in ATP binding.

The protein belongs to the thymidylate kinase family.

The catalysed reaction is dTMP + ATP = dTDP + ADP. Its function is as follows. Phosphorylation of dTMP to form dTDP in both de novo and salvage pathways of dTTP synthesis. This is Thymidylate kinase from Cutibacterium acnes (strain DSM 16379 / KPA171202) (Propionibacterium acnes).